The primary structure comprises 523 residues: GMP synthase [glutamine-hydrolyzing] (523 aa).

One can recognise a Glutamine amidotransferase type-1 domain in the interval Lys8–Lys205. Catalysis depends on Cys85, which acts as the Nucleophile. Active-site residues include His179 and Glu181. The GMPS ATP-PPase domain occupies Trp206–Arg398. Ser233–Ser239 serves as a coordination point for ATP.

In terms of assembly, homodimer.

It catalyses the reaction XMP + L-glutamine + ATP + H2O = GMP + L-glutamate + AMP + diphosphate + 2 H(+). The protein operates within purine metabolism; GMP biosynthesis; GMP from XMP (L-Gln route): step 1/1. In terms of biological role, catalyzes the synthesis of GMP from XMP. This is GMP synthase [glutamine-hydrolyzing] from Glaesserella parasuis serovar 5 (strain SH0165) (Haemophilus parasuis).